A 482-amino-acid polypeptide reads, in one-letter code: Retrovirus-related Pol polyprotein from type-1 retrotransposable element R2 (482 aa).

The Reverse transcriptase domain maps to 1-84 (AYADDLILFA…DYFKYLGSRY (84 aa)). Positions 208 to 482 (QIPAVEKFYQ…ATGGRGRGDI (275 aa)) are nucleic acid-binding endonuclease.

The catalysed reaction is DNA(n) + a 2'-deoxyribonucleoside 5'-triphosphate = DNA(n+1) + diphosphate. This Popillia japonica (Japanese beetle) protein is Retrovirus-related Pol polyprotein from type-1 retrotransposable element R2.